The following is a 297-amino-acid chain: Protein AKTIP homolog (297 aa).

The disordered stretch occupies residues 13–75 (FLSDLDEKSS…QRSPSGSSPE (63 aa)). Basic and acidic residues predominate over residues 17 to 42 (LDEKSSSSPHDEKKPGDGREVREEKS). Polar residues predominate over residues 59 to 75 (MNLSIARQRSPSGSSPE). A UBC core domain is found at 84-232 (FLEYTLMAEY…VNECLRRCHN (149 aa)).

This sequence belongs to the ubiquitin-conjugating enzyme family. FTS subfamily.

The protein is Protein AKTIP homolog of Nematostella vectensis (Starlet sea anemone).